A 248-amino-acid polypeptide reads, in one-letter code: Ribosomal RNA small subunit methyltransferase J (248 aa).

Residues 97–98, 113–114, and aspartate 167 each bind S-adenosyl-L-methionine; these read RD and ER.

The protein belongs to the methyltransferase superfamily. RsmJ family.

It localises to the cytoplasm. It catalyses the reaction guanosine(1516) in 16S rRNA + S-adenosyl-L-methionine = N(2)-methylguanosine(1516) in 16S rRNA + S-adenosyl-L-homocysteine + H(+). Specifically methylates the guanosine in position 1516 of 16S rRNA. This is Ribosomal RNA small subunit methyltransferase J from Aeromonas hydrophila subsp. hydrophila (strain ATCC 7966 / DSM 30187 / BCRC 13018 / CCUG 14551 / JCM 1027 / KCTC 2358 / NCIMB 9240 / NCTC 8049).